The following is a 117-amino-acid chain: MYQSINKLLLQHQKKYLRYVDTTDYSSENLDLDQFSYFIITINKTDKCILIEQFCYNAEGHIYSIFFKGPTAKHLSSIICHFQQLNTIISTAHAIYLGRELMKSELALVLDQQYIQD.

Belongs to the ycf91 family.

It localises to the plastid. It is found in the chloroplast. This is an uncharacterized protein from Pyropia yezoensis (Susabi-nori).